A 219-amino-acid chain; its full sequence is Glycosylphosphatidylinositol anchor biosynthesis protein 11 (219 aa).

Topologically, residues 1–45 are cytoplasmic; sequence MPAKKRTRKTVKKTVSFSDDTTLTTHQNREKKNVDHDRPPVYVRK. Ser-16 is subject to Phosphoserine. A helical transmembrane segment spans residues 46-66; the sequence is TPLMTFPYHLVALLYYYVFVS. Position 67 (Ser-67) is a topological domain, lumenal. A helical transmembrane segment spans residues 68–88; that stretch reads NFNTVKLLSFLIPTQVAYLVL. Residues 89–108 are Cytoplasmic-facing; that stretch reads QFNKCTVYGNKIIKINYSLT. Residues 109 to 129 traverse the membrane as a helical segment; the sequence is IICLGVTFLLSFPTMLLTILF. Over 130–135 the chain is Lumenal; it reads GAPLMD. A helical transmembrane segment spans residues 136–156; that stretch reads LLWETWLLSLHFAFLAYPAVY. Over 157 to 170 the chain is Cytoplasmic; that stretch reads SVFNCDFKVGLWKK. A helical transmembrane segment spans residues 171 to 191; that stretch reads YFIFIVVGGWISCVVIPLDWD. Topologically, residues 192–198 are lumenal; the sequence is RDWQNWP. Residues 199–217 traverse the membrane as a helical segment; that stretch reads IPIVVGGYLGALVGYTIGA. Residues 218 to 219 lie on the Cytoplasmic side of the membrane; the sequence is YI.

Belongs to the PIGF family.

The protein localises to the endoplasmic reticulum membrane. It functions in the pathway glycolipid biosynthesis; glycosylphosphatidylinositol-anchor biosynthesis. In terms of biological role, acts in the GPI biosynthetic pathway between GlcNAc-PI synthesis and GPI transfer to protein. Required for the formation of complete GPI precursors CP1 and CP2. The sequence is that of Glycosylphosphatidylinositol anchor biosynthesis protein 11 (GPI11) from Saccharomyces cerevisiae (strain ATCC 204508 / S288c) (Baker's yeast).